Consider the following 391-residue polypeptide: MTNGLYLDCHAGIAGDMLLSSLVDLGADVDYVHQHLLSLPLDQFSLNFAKKNKQGIQAMGLTIDFEEAHHHRKASDIFNMINESTLPNRVKERSMLIFDVIAQAEAKIHGMKIEDVHFHEVGAMDSIIDIIGSCLALEDLGIDEIKSSPVPTGNGKIKIAHGIYPIPAPATAEILKDIPLATFDVQSELTTPTGAAFIKALATHIGPLSAVSMSNIGYGCGTKDFEFPNVIRAIQYTATETTPNQVQVLECQIDDMTPETLGYFIEQVINEGALDAFYTPITMKKSRPATQLTVISSVTQAKEFEDFILKHTTSLGVRSYAVNRKILHRQFQTIHTTYGAILVKLAMKDNKIIKAKPEFEDVKNAALHSGQSFTNVYNDIQNEVRKHIQID.

Belongs to the LarC family.

The catalysed reaction is Ni(II)-pyridinium-3,5-bisthiocarboxylate mononucleotide = pyridinium-3,5-bisthiocarboxylate mononucleotide + Ni(2+). Its function is as follows. Involved in the biosynthesis of a nickel-pincer cofactor ((SCS)Ni(II) pincer complex). Binds Ni(2+), and functions in nickel delivery to pyridinium-3,5-bisthiocarboxylic acid mononucleotide (P2TMN), to form the mature cofactor. Is thus probably required for the activation of nickel-pincer cofactor-dependent enzymes. The sequence is that of Pyridinium-3,5-bisthiocarboxylic acid mononucleotide nickel insertion protein from Staphylococcus saprophyticus subsp. saprophyticus (strain ATCC 15305 / DSM 20229 / NCIMB 8711 / NCTC 7292 / S-41).